A 361-amino-acid polypeptide reads, in one-letter code: uncharacterized protein (361 aa).

A signal peptide spans 1–19 (MNLVICVLLLSIWKNNCMT). At 20 to 47 (TNQTNGSSTTGDKPVESMQTKLNYLRRN) the chain is on the extracellular side. Asparagine 24 is a glycosylation site (N-linked (GlcNAc...) asparagine). A helical transmembrane segment spans residues 48–68 (LLILVGIIIMVFVFICFCYLH). The Cytoplasmic portion of the chain corresponds to 69–361 (YNCLSDDASK…QVTSEVTLND (293 aa)). The segment covering 99 to 113 (AKTASQCSPETQPML) has biased composition (polar residues). Disordered regions lie at residues 99-184 (AKTA…KAHK), 209-247 (PPQL…NPKR), and 295-316 (QNLH…LDSR). Residues 114-133 (STADKSSDSSSPERASAQSS) are compositionally biased toward low complexity. The segment covering 141–150 (SSLQKPSIPN) has biased composition (polar residues). Over residues 299 to 308 (VSSKVKSSSR) the composition is skewed to low complexity.

Its subcellular location is the membrane. This is an uncharacterized protein from Homo sapiens (Human).